A 197-amino-acid polypeptide reads, in one-letter code: Protein Hikeshi (197 aa).

The interval 18–55 (VAEDKFVFDLPDYESINHVVVFMLGTIPFPEGMGGSVY) is required for F-X-F-G repeats-nucleoporins recognition and nuclear import. The segment at 124–134 (QTPVGNAAVSS) is flexible linker region involved in nuclear import of HSP70 proteins.

This sequence belongs to the OPI10 family. In terms of assembly, forms an asymmetric homodimer; required for binding and nuclear import of HSP70 proteins. Interacts with ATP-bound HSP70 proteins. Interacts with NUP62 and NUP153 (via F-X-F-G repeats). Interacts with HSPA8.

Its subcellular location is the cytoplasm. It is found in the cytosol. The protein localises to the nucleus. In terms of biological role, acts as a specific nuclear import carrier for HSP70 proteins following heat-shock stress: acts by mediating the nucleoporin-dependent translocation of ATP-bound HSP70 proteins into the nucleus. HSP70 proteins import is required to protect cells from heat shock damages. Does not translocate ADP-bound HSP70 proteins into the nucleus. The sequence is that of Protein Hikeshi from Homo sapiens (Human).